The primary structure comprises 351 residues: Putative aminodehydroquinate synthase (351 aa).

Residues 65–68 (EPTK), 97–101 (GTTTD), 121–122 (TS), Lys134, Lys143, and 161–164 (YLTT) contribute to the NAD(+) site. Positions 176, 225, and 241 each coordinate Zn(2+).

This sequence belongs to the sugar phosphate cyclases superfamily. aDHQS family. NAD(+) is required as a cofactor. Requires Co(2+) as cofactor. Zn(2+) serves as cofactor.

Its function is as follows. May catalyze the conversion of 3,4-dideoxy-4-amino-D-arabino-heptulosonate 7-phosphate (aDAHP) to 5-deoxy-5-amino-3-dehydroquinate (aDHQ). Probably involved in the formation of 3-amino-5-hydroxybenzoic acid (AHBA), the precursor of rifamycin and related ansamycins. In Amycolatopsis mediterranei (strain S699) (Nocardia mediterranei), this protein is Putative aminodehydroquinate synthase.